A 104-amino-acid chain; its full sequence is MVKKVTQDNIQSKLALVMRSGKATLGYKSTIKAIRNGTAKLVFISNNCPTVRKSEIEYYASLAQISIHHFVGSNVELGTACGKYHRCSTMAILDAGDSDILKTE.

Belongs to the eukaryotic ribosomal protein eL30 family.

The sequence is that of Large ribosomal subunit protein eL30 (RPL30) from Tetrahymena thermophila (strain SB210).